A 345-amino-acid chain; its full sequence is Nuclear distribution protein nudE-like 1 (345 aa).

Residues 28–190 (QSFQEARDEL…LAVRERQQEV (163 aa)) adopt a coiled-coil conformation. The tract at residues 56–166 (VQAEQRNRDL…LDEKESLLVS (111 aa)) is self-association. The tract at residues 64-189 (DLQADNQRLK…ELAVRERQQE (126 aa)) is interaction with KATNB1. The segment at 114–133 (YVRELEQANDDLERAKRATI) is required for interaction with PAFAH1B1. The tract at residues 175–345 (RDLRQELAVR…SAPGMLPLSV (171 aa)) is interaction with CENPF. The interaction with YWHAE stretch occupies residues 189-256 (EVTRKSAPSS…SARISALNIV (68 aa)). The segment at 191–345 (TRKSAPSSPT…SAPGMLPLSV (155 aa)) is interaction with NEFL. The interval 195–256 (APSSPTLDCE…SARISALNIV (62 aa)) is interaction with KATNA1. Phosphoserine is present on Ser-215. A Phosphothreonine; by CDK1 and MAPK1 modification is found at Thr-219. Ser-231 bears the Phosphoserine mark. Residues 241 to 280 (TSPLTPSARISALNIVGDLLRKVGALESKLAACRNFAKDQ) are interaction with DISC1. The residue at position 242 (Ser-242) is a Phosphoserine; by CDK1. Thr-245 is modified (phosphothreonine; by CDK1 and MAPK1). The tract at residues 256-291 (VGDLLRKVGALESKLAACRNFAKDQASRKSYISGNV) is required for localization to the centrosome and interaction with dynein, dynactin, tubulin gamma, PCM1 and PCNT. A lipid anchor (S-palmitoyl cysteine; by ZDHHC2, ZDHHC3 and ZDHHC7) is attached at Cys-273. A disordered region spans residues 315 to 345 (GAVNGFDPAPPPPGLGSSRPSSAPGMLPLSV). The span at 329–339 (LGSSRPSSAPG) shows a compositional bias: low complexity. Ser-344 is modified (phosphoserine).

It belongs to the nudE family. As to quaternary structure, interacts with PLEKHM1 (via N- and C-terminus). Interacts with YWHAE. Interacts directly with NEFL and indirectly with NEFH. Interacts with microtubules. Self-associates. Interacts with DISC1, dynein, dynactin, tubulin gamma, KATNA1, KATNB1, PAFAH1B1, PCM1 and PCNT. Interacts (via C-terminus) with CENPF. Interacts with ZNF365. Interacts with GTP-bound RAB9A; the interaction may lead to RAB9A-dynein motor tethering. Phosphorylated in mitosis. Can be phosphorylated by CDK1, CDK5 and MAPK1. Phosphorylation by CDK5 promotes interaction with KATNA1 and YWHAE. Post-translationally, palmitoylation at Cys-273 reduces affinity for dynein. Expressed in brain, heart, kidney, liver, lung, pancreas, placenta and skeletal muscle.

Its subcellular location is the cytoplasm. The protein localises to the cytoskeleton. It localises to the microtubule organizing center. The protein resides in the centrosome. It is found in the chromosome. Its subcellular location is the centromere. The protein localises to the kinetochore. It localises to the spindle. In terms of biological role, required for organization of the cellular microtubule array and microtubule anchoring at the centrosome. May regulate microtubule organization at least in part by targeting the microtubule severing protein KATNA1 to the centrosome. Also positively regulates the activity of the minus-end directed microtubule motor protein dynein. May enhance dynein-mediated microtubule sliding by targeting dynein to the microtubule plus ends. Required for several dynein- and microtubule-dependent processes such as the maintenance of Golgi integrity, the centripetal motion of secretory vesicles and the coupling of the nucleus and centrosome. Also required during brain development for the migration of newly formed neurons from the ventricular/subventricular zone toward the cortical plate. Plays a role, together with DISC1, in the regulation of neurite outgrowth. Required for mitosis in some cell types but appears to be dispensible for mitosis in cortical neuronal progenitors, which instead requires NDE1. Facilitates the polymerization of neurofilaments from the individual subunits NEFH and NEFL. Positively regulates lysosome peripheral distribution and ruffled border formation in osteoclasts. Plays a role, together with DISC1, in the regulation of neurite outgrowth. May act as a RAB9A/B effector that tethers RAB9-associated late endosomes to the dynein motor for their retrograde transport to the trans-Golgi network. The sequence is that of Nuclear distribution protein nudE-like 1 (NDEL1) from Homo sapiens (Human).